Here is a 383-residue protein sequence, read N- to C-terminus: Succinyl-diaminopimelate desuccinylase (383 aa).

Histidine 73 contacts Zn(2+). Residue aspartate 75 is part of the active site. Residue aspartate 107 participates in Zn(2+) binding. Glutamate 141 acts as the Proton acceptor in catalysis. The Zn(2+) site is built by glutamate 142, glutamate 170, and histidine 356.

It belongs to the peptidase M20A family. DapE subfamily. Homodimer. Requires Zn(2+) as cofactor. It depends on Co(2+) as a cofactor.

It catalyses the reaction N-succinyl-(2S,6S)-2,6-diaminopimelate + H2O = (2S,6S)-2,6-diaminopimelate + succinate. Its pathway is amino-acid biosynthesis; L-lysine biosynthesis via DAP pathway; LL-2,6-diaminopimelate from (S)-tetrahydrodipicolinate (succinylase route): step 3/3. Functionally, catalyzes the hydrolysis of N-succinyl-L,L-diaminopimelic acid (SDAP), forming succinate and LL-2,6-diaminopimelate (DAP), an intermediate involved in the bacterial biosynthesis of lysine and meso-diaminopimelic acid, an essential component of bacterial cell walls. The sequence is that of Succinyl-diaminopimelate desuccinylase from Pseudomonas putida (strain ATCC 700007 / DSM 6899 / JCM 31910 / BCRC 17059 / LMG 24140 / F1).